We begin with the raw amino-acid sequence, 162 residues long: Photosystem II extrinsic protein V (162 aa).

The signal sequence occupies residues 1-25 (MFKKFSALFTLLFTLCLVNPMLVYS). Heme c-binding residues include cysteine 62, cysteine 65, histidine 66, and histidine 117.

The protein belongs to the cytochrome c family. PsbV subfamily. As to quaternary structure, PSII is composed of 1 copy each of membrane proteins PsbA, PsbB, PsbC, PsbD, PsbE, PsbF, PsbH, PsbI, PsbJ, PsbK, PsbL, PsbM, PsbT, PsbX, PsbY, PsbZ, Psb30/Ycf12, at least 3 peripheral proteins of the oxygen-evolving complex and a large number of cofactors. It forms dimeric complexes. Heme c serves as cofactor.

It localises to the plastid. It is found in the chloroplast thylakoid membrane. In terms of biological role, one of the extrinsic, lumenal subunits of photosystem II (PSII). PSII is a light-driven water plastoquinone oxidoreductase, using light energy to abstract electrons from H(2)O, generating a proton gradient subsequently used for ATP formation. The extrinsic proteins stabilize the structure of photosystem II oxygen-evolving complex (OEC), the ion environment of oxygen evolution and protect the OEC against heat-induced inactivation. In Guillardia theta (Cryptophyte), this protein is Photosystem II extrinsic protein V.